Consider the following 107-residue polypeptide: Iron-binding protein IscA (107 aa).

Positions 35, 99, and 101 each coordinate Fe cation.

The protein belongs to the HesB/IscA family. As to quaternary structure, homodimer; may form tetramers and higher multimers. Requires Fe cation as cofactor.

Its function is as follows. Is able to transfer iron-sulfur clusters to apo-ferredoxin. Multiple cycles of [2Fe2S] cluster formation and transfer are observed, suggesting that IscA acts catalytically. Recruits intracellular free iron so as to provide iron for the assembly of transient iron-sulfur cluster in IscU in the presence of IscS, L-cysteine and the thioredoxin reductase system TrxA/TrxB. The sequence is that of Iron-binding protein IscA from Serratia proteamaculans (strain 568).